A 435-amino-acid polypeptide reads, in one-letter code: Serine hydroxymethyltransferase (435 aa).

(6S)-5,6,7,8-tetrahydrofolate-binding positions include Leu-133 and 137–139 (GHL). Lys-242 is subject to N6-(pyridoxal phosphate)lysine.

Belongs to the SHMT family. Homodimer. Pyridoxal 5'-phosphate serves as cofactor.

It localises to the cytoplasm. The catalysed reaction is (6R)-5,10-methylene-5,6,7,8-tetrahydrofolate + glycine + H2O = (6S)-5,6,7,8-tetrahydrofolate + L-serine. It functions in the pathway one-carbon metabolism; tetrahydrofolate interconversion. Its pathway is amino-acid biosynthesis; glycine biosynthesis; glycine from L-serine: step 1/1. Its function is as follows. Catalyzes the reversible interconversion of serine and glycine with tetrahydrofolate (THF) serving as the one-carbon carrier. This reaction serves as the major source of one-carbon groups required for the biosynthesis of purines, thymidylate, methionine, and other important biomolecules. Also exhibits THF-independent aldolase activity toward beta-hydroxyamino acids, producing glycine and aldehydes, via a retro-aldol mechanism. This Sphingopyxis alaskensis (strain DSM 13593 / LMG 18877 / RB2256) (Sphingomonas alaskensis) protein is Serine hydroxymethyltransferase.